A 310-amino-acid chain; its full sequence is Carbamate kinase (310 aa).

Belongs to the carbamate kinase family.

It localises to the cytoplasm. It carries out the reaction hydrogencarbonate + NH4(+) + ATP = carbamoyl phosphate + ADP + H2O + H(+). Its pathway is metabolic intermediate metabolism; carbamoyl phosphate degradation; CO(2) and NH(3) from carbamoyl phosphate: step 1/1. The chain is Carbamate kinase (arcC) from Staphylococcus epidermidis (strain ATCC 35984 / DSM 28319 / BCRC 17069 / CCUG 31568 / BM 3577 / RP62A).